The following is a 97-amino-acid chain: Aspartyl/glutamyl-tRNA(Asn/Gln) amidotransferase subunit C (97 aa).

The tract at residues 68–97 (ETGFTQEEALSNAPQQSQGQFRTPKVVESA) is disordered. Residues 70–88 (GFTQEEALSNAPQQSQGQF) are compositionally biased toward polar residues.

It belongs to the GatC family. Heterotrimer of A, B and C subunits.

The catalysed reaction is L-glutamyl-tRNA(Gln) + L-glutamine + ATP + H2O = L-glutaminyl-tRNA(Gln) + L-glutamate + ADP + phosphate + H(+). It catalyses the reaction L-aspartyl-tRNA(Asn) + L-glutamine + ATP + H2O = L-asparaginyl-tRNA(Asn) + L-glutamate + ADP + phosphate + 2 H(+). Allows the formation of correctly charged Asn-tRNA(Asn) or Gln-tRNA(Gln) through the transamidation of misacylated Asp-tRNA(Asn) or Glu-tRNA(Gln) in organisms which lack either or both of asparaginyl-tRNA or glutaminyl-tRNA synthetases. The reaction takes place in the presence of glutamine and ATP through an activated phospho-Asp-tRNA(Asn) or phospho-Glu-tRNA(Gln). The protein is Aspartyl/glutamyl-tRNA(Asn/Gln) amidotransferase subunit C of Akkermansia muciniphila (strain ATCC BAA-835 / DSM 22959 / JCM 33894 / BCRC 81048 / CCUG 64013 / CIP 107961 / Muc).